We begin with the raw amino-acid sequence, 185 residues long: Neuronal vesicle trafficking-associated protein 1 (185 aa).

At M1–K82 the chain is on the cytoplasmic side. A helical; Signal-anchor for type II membrane protein membrane pass occupies residues V83–Y103. Residues K104–A185 lie on the Lumenal side of the membrane. The tract at residues E129–W164 is required for GRIP1 interaction.

The protein belongs to the NSG family. In terms of assembly, forms a complex with GRIP1, GRIA2 and STX12 through direct interaction with GRIP1; controls the intracellular fate of AMPAR and the endosomal sorting of the GRIA2 subunit toward recycling and membrane targeting. Interacts with STX12. Interacts with APP; could regulate APP processing. Interacts with FAM171A1. As to expression, pituitary and less in adrenal gland and testis. Expressed in the hippocampus throughout development. At P0, highly and broadly expressed throughout the cortical plate, but is down-regulated overall at P8 and P14, but remains relatively enriched in layer V. At P0 is expressed ubiquitously in the developing cerebellum namely Purkinje neurons as well as granule neurons. However, it becomes restricted to Purkinje cells by P8. This exclusive expression in Purkinje cells is maintained throughout adulthood.

It is found in the membrane. The protein resides in the golgi apparatus. It localises to the trans-Golgi network membrane. The protein localises to the endosome membrane. Its subcellular location is the cell projection. It is found in the dendrite. The protein resides in the early endosome membrane. It localises to the late endosome membrane. The protein localises to the lysosome lumen. Its subcellular location is the recycling endosome membrane. It is found in the cytoplasmic vesicle membrane. The protein resides in the golgi stack membrane. It localises to the endosome. The protein localises to the multivesicular body membrane. Its subcellular location is the endoplasmic reticulum membrane. Its function is as follows. Plays a role in the recycling mechanism in neurons of multiple receptors, including AMPAR, APP and L1CAM and acts at the level of early endosomes to promote sorting of receptors toward a recycling pathway. Regulates sorting and recycling of GRIA2 through interaction with GRIP1 and then contributes to the regulation of synaptic transmission and plasticity by affecting the recycling and targeting of AMPA receptors to the synapse. Is required for faithful sorting of L1CAM to axons by facilitating trafficking from somatodendritic early endosome or the recycling endosome. In an other hand, induces apoptosis via the activation of CASP3 in response to DNA damage. This chain is Neuronal vesicle trafficking-associated protein 1, found in Mus musculus (Mouse).